We begin with the raw amino-acid sequence, 332 residues long: tRNA-dihydrouridine(20/20a) synthase (332 aa).

FMN is bound by residues 19-21 and Q71; that span reads PML. Catalysis depends on C101, which acts as the Proton donor. FMN is bound by residues K140, H173, 213–215, and 235–236; these read NGG and GR.

This sequence belongs to the Dus family. DusA subfamily. Requires FMN as cofactor.

It carries out the reaction 5,6-dihydrouridine(20) in tRNA + NADP(+) = uridine(20) in tRNA + NADPH + H(+). It catalyses the reaction 5,6-dihydrouridine(20) in tRNA + NAD(+) = uridine(20) in tRNA + NADH + H(+). The enzyme catalyses 5,6-dihydrouridine(20a) in tRNA + NADP(+) = uridine(20a) in tRNA + NADPH + H(+). The catalysed reaction is 5,6-dihydrouridine(20a) in tRNA + NAD(+) = uridine(20a) in tRNA + NADH + H(+). In terms of biological role, catalyzes the synthesis of 5,6-dihydrouridine (D), a modified base found in the D-loop of most tRNAs, via the reduction of the C5-C6 double bond in target uridines. Specifically modifies U20 and U20a in tRNAs. In Salmonella typhimurium (strain LT2 / SGSC1412 / ATCC 700720), this protein is tRNA-dihydrouridine(20/20a) synthase.